Here is a 518-residue protein sequence, read N- to C-terminus: Protein PNS1 (518 aa).

The span at 1–14 shows a compositional bias: pro residues; it reads MSDYPPPNYPPPNH. A disordered region spans residues 1-24; sequence MSDYPPPNYPPPNHPQYQQQQDET. The Cytoplasmic segment spans residues 1–63; sequence MSDYPPPNYP…KVEKPKFNDW (63 aa). A helical membrane pass occupies residues 64–84; sequence PFAIFFWLVVAGFIAVAGITL. The Extracellular portion of the chain corresponds to 85 to 111; that stretch reads NALRSTYGFQGGSIYGSGNTFTLNTNT. A helical membrane pass occupies residues 112-132; the sequence is IILFAFIIVMAFILSAAIIVF. At 133-139 the chain is on the cytoplasmic side; that stretch reads ARLAPKA. A helical membrane pass occupies residues 140-160; the sequence is FIVTGVILNVVLGIGTAIFYF. The Extracellular segment spans residues 161 to 163; it reads VEK. A helical membrane pass occupies residues 164–184; sequence YYSAAIVFLIFALFGAWCYWS. The Cytoplasmic segment spans residues 185 to 210; sequence SRHRIPLSATILTIVIDVMKMYPSTL. Residues 211–231 form a helical membrane-spanning segment; that stretch reads IASFIGLIFSAAFSALFSIVI. Residues 232 to 256 lie on the Extracellular side of the membrane; the sequence is VATYVKYDPNSNNEACSVGGGSCSK. The chain crosses the membrane as a helical span at residues 257 to 277; the sequence is GKLIGVLVFVFFAGYYISEVI. Over 278 to 314 the chain is Cytoplasmic; that stretch reads RNVIHVVIAGIYGTWYYLANSDQGAPKHPALSSLKRA. A helical membrane pass occupies residues 315–335; it reads LTYCFGSITFGSLIVSLIQLL. Over 336-351 the chain is Extracellular; that stretch reads RQFISILRSNFAADGN. Residues 352 to 372 form a helical membrane-spanning segment; that stretch reads GWGVCGMIILDFFVGFIDWLV. Topologically, residues 373–417 are cytoplasmic; that stretch reads RYLNKYAYCYVALYGKSYIKSAKDTFDLIRFKGMDALINDMFINT. Residues 418-438 traverse the membrane as a helical segment; the sequence is ALNLYSLFVAYLVALLAYLYL. Topologically, residues 439-445 are extracellular; that stretch reads KFTKPEY. A helical transmembrane segment spans residues 446-466; sequence NSGGAFYAPVIAFAFLIAGQI. The Cytoplasmic portion of the chain corresponds to 467–518; the sequence is NRISLTVIESGTATFFVALAKDPEIFQMTNRNRFDDIFRNYPQVLEKITSDH.

Belongs to the CTL (choline transporter-like) family.

It is found in the cell membrane. In terms of biological role, probably involved in transport through the plasma membrane. The protein is Protein PNS1 (PNS1) of Candida albicans (strain SC5314 / ATCC MYA-2876) (Yeast).